The sequence spans 313 residues: Esterase mpl1 (313 aa).

Catalysis depends on charge relay system residues Ser-174, Asp-259, and His-287.

The protein belongs to the LovG family.

Its pathway is mycotoxin biosynthesis. Functionally, esterase; part of the gene cluster that mediates the biosynthesis of the mycotoxin citrinin, a hepato-nephrotoxic compound to humans due to inhibition of respiration complex III. The pathway begins with the synthesis of a keto-aldehyde intermediate by the citrinin PKS (pksCT) from successive condensations of 4 malonyl-CoA units, presumably with a simple acetyl-CoA starter unit. Release of the keto-aldehyde intermediate is consistent with the presence of the C-terminal reductive release domain. Mp11 collaborates with pksCT by catalyzing the hydrolysis of ACP-bound acyl intermediates to free the ACP from stalled intermediates. Mpl2 then catalyzes the oxidation of the C-12 methyl of the ketone intermediate to an alcohol intermediate which is further oxidized by the oxidoreductase mpl7 to produce a bisaldehyde intermediate. The fourth catalytic step is catalyzed by the mpl4 aldehyde dehydrogenase. The final transformation is the reduction of C-3 by mpl6 to provide the chemically stable citrinin nucleus. The polypeptide is Esterase mpl1 (Monascus purpureus (Red mold)).